Here is a 349-residue protein sequence, read N- to C-terminus: MSDFQREQRKNEHVEIAMAQSDAMHSDFDKMRFVHHSIPSINVNDIDLTSQTPDLTMTYPVYINAMTGGSEWTKNINEKLAVVARETGLAMAVGSTHAALRNPRMAETFTIARKMNPEGMIFSNVGADVPVEKALEAVELLEAQALQIHVNSPQELVMPEGNREFVTWLDNIASIVSRVSVPVIIKEVGFGMSKELMHDLQQIGVKYVDVSGKGGTNFVDIENERRANKDMDYLSSWGQSTVESLLETTAYQSEISVFASGGLRTPLDAIKSLALGAKATGMSRPFLNQVENNGIAHTVAYVESFIEHMKSIMTMLDAKNIDDLTQKQIVFSPEILSWIEQRNLNIHRG.

9–10 (RK) lines the substrate pocket. FMN is bound by residues 65–67 (AMT), S95, and N124. 95-97 (STH) is a substrate binding site. Q154 provides a ligand contact to substrate. Mg(2+) is bound at residue E155. FMN-binding positions include K186, S211, T216, 262 to 264 (GLR), and 283 to 284 (SR).

The protein belongs to the IPP isomerase type 2 family. In terms of assembly, homooctamer. Dimer of tetramers. FMN is required as a cofactor. It depends on NADPH as a cofactor. Mg(2+) serves as cofactor.

It is found in the cytoplasm. The enzyme catalyses isopentenyl diphosphate = dimethylallyl diphosphate. Its function is as follows. Involved in the biosynthesis of isoprenoids. Catalyzes the 1,3-allylic rearrangement of the homoallylic substrate isopentenyl (IPP) to its allylic isomer, dimethylallyl diphosphate (DMAPP). This Staphylococcus aureus protein is Isopentenyl-diphosphate delta-isomerase.